The following is a 586-amino-acid chain: Urease subunit alpha (586 aa).

The Urease domain occupies 134 to 586; that stretch reads GAIDTHIHFI…LPMAQRYFLF (453 aa). His139, His141, and Lys222 together coordinate Ni(2+). Lys222 is modified (N6-carboxylysine). Residue His224 participates in substrate binding. Ni(2+)-binding residues include His251 and His277. His325 serves as the catalytic Proton donor. Asp365 is a binding site for Ni(2+).

This sequence belongs to the metallo-dependent hydrolases superfamily. Urease alpha subunit family. As to quaternary structure, heterotrimer of UreA (gamma), UreB (beta) and UreC (alpha) subunits. Three heterotrimers associate to form the active enzyme. Requires Ni cation as cofactor. In terms of processing, carboxylation allows a single lysine to coordinate two nickel ions.

The protein localises to the cytoplasm. The catalysed reaction is urea + 2 H2O + H(+) = hydrogencarbonate + 2 NH4(+). The protein operates within nitrogen metabolism; urea degradation; CO(2) and NH(3) from urea (urease route): step 1/1. The protein is Urease subunit alpha of Gloeothece citriformis (strain PCC 7424) (Cyanothece sp. (strain PCC 7424)).